A 374-amino-acid chain; its full sequence is Chaperone protein DnaJ (374 aa).

Positions 5-70 (DYYEVLGVAK…QKRAAYDRYG (66 aa)) constitute a J domain. A CR-type zinc finger spans residues 134-212 (GFDTEIRVPS…CDGVGRIRRN (79 aa)). The Zn(2+) site is built by cysteine 147, cysteine 150, cysteine 164, cysteine 167, cysteine 186, cysteine 189, cysteine 200, and cysteine 203. 4 CXXCXGXG motif repeats span residues 147 to 154 (CDTCHGSG), 164 to 171 (CRTCGGSG), 186 to 193 (CPTCHGTG), and 200 to 207 (CPSCDGVG).

It belongs to the DnaJ family. As to quaternary structure, homodimer. The cofactor is Zn(2+).

It is found in the cytoplasm. Participates actively in the response to hyperosmotic and heat shock by preventing the aggregation of stress-denatured proteins and by disaggregating proteins, also in an autonomous, DnaK-independent fashion. Unfolded proteins bind initially to DnaJ; upon interaction with the DnaJ-bound protein, DnaK hydrolyzes its bound ATP, resulting in the formation of a stable complex. GrpE releases ADP from DnaK; ATP binding to DnaK triggers the release of the substrate protein, thus completing the reaction cycle. Several rounds of ATP-dependent interactions between DnaJ, DnaK and GrpE are required for fully efficient folding. Also involved, together with DnaK and GrpE, in the DNA replication of plasmids through activation of initiation proteins. This Bordetella petrii (strain ATCC BAA-461 / DSM 12804 / CCUG 43448) protein is Chaperone protein DnaJ.